The primary structure comprises 284 residues: Bifunctional protein FolD (284 aa).

NADP(+)-binding positions include 166–168 (GAS), Ser-191, and Ile-232.

This sequence belongs to the tetrahydrofolate dehydrogenase/cyclohydrolase family. As to quaternary structure, homodimer.

It catalyses the reaction (6R)-5,10-methylene-5,6,7,8-tetrahydrofolate + NADP(+) = (6R)-5,10-methenyltetrahydrofolate + NADPH. It carries out the reaction (6R)-5,10-methenyltetrahydrofolate + H2O = (6R)-10-formyltetrahydrofolate + H(+). The protein operates within one-carbon metabolism; tetrahydrofolate interconversion. Its function is as follows. Catalyzes the oxidation of 5,10-methylenetetrahydrofolate to 5,10-methenyltetrahydrofolate and then the hydrolysis of 5,10-methenyltetrahydrofolate to 10-formyltetrahydrofolate. The polypeptide is Bifunctional protein FolD (Neisseria meningitidis serogroup C (strain 053442)).